A 143-amino-acid polypeptide reads, in one-letter code: Small ribosomal subunit protein eS12 (143 aa).

Belongs to the eukaryotic ribosomal protein eS12 family.

The polypeptide is Small ribosomal subunit protein eS12 (RPS12) (Hordeum vulgare (Barley)).